The chain runs to 1016 residues: Kinesin-like protein KIN-14K (1016 aa).

The 108-residue stretch at 14–121 (ADRRAEVIEW…CLLVLRESVS (108 aa)) folds into the Calponin-homology (CH) domain. The tract at residues 123-176 (GLRDGTSKAPLRKKWRVPETGEPLVPGVAQGKTSPGEDKRNGLPDPKSQQKTPI) is disordered. The stretch at 288 to 354 (VNGTNEENQM…EVMTSMHEQQ (67 aa)) forms a coiled coil. Positions 481–808 (NIRVYCRVRP…LKFAERVSGV (328 aa)) constitute a Kinesin motor domain. 565 to 572 (GQTGSGKT) is an ATP binding site. The stretch at 820–852 (KDIKELLEQVASLKDTIVRKDTEIEQLQLMKDK) forms a coiled coil. 2 stretches are compositionally biased toward polar residues: residues 884–893 (NQQSQLSDPQ) and 990–1004 (KTPN…QLIG). Disordered stretches follow at residues 884–912 (NQQS…DITP) and 971–1016 (LTKN…RWQK).

Belongs to the TRAFAC class myosin-kinesin ATPase superfamily. Kinesin family. KIN-14 subfamily.

This is Kinesin-like protein KIN-14K from Oryza sativa subsp. japonica (Rice).